We begin with the raw amino-acid sequence, 6629 residues long: Replicase polyprotein 1ab (6629 aa).

Topologically, residues 1–1750 (MASSLKQGVS…VASYKTVLCK (1750 aa)) are cytoplasmic. The 106-residue stretch at 675–780 (KTVTFGETTV…SCHLIYRDYE (106 aa)) folds into the Ubiquitin-like 1 domain. The tract at residues 783-802 (DDIEEEDAEECDTDSGEAEE) is disordered. In terms of domain architecture, Macro spans 1003–1179 (VKPATCEKPK…YFDVTCKQKT (177 aa)). The Ubiquitin-like 2 domain occupies 1175–1227 (CKQKTIYLTEDGVKYRSIVLKPGDSLGQFGQVYAKNKIVFTADDVEDKEILYV). Residues 1236–1497 (EYYGLDAQKY…SKSVKEDVSN (262 aa)) form the Peptidase C16 domain. Cys-1274 serves as the catalytic For PL-PRO activity. The Zn(2+) site is built by Cys-1353, Cys-1355, Cys-1387, and Cys-1390. The segment at 1353–1390 (CNCGIKSYELRGLEACIQPVRATNLLHFKTQYSNCPTC) adopts a C4-type; degenerate zinc-finger fold. Residues His-1437 and Asp-1448 each act as for PL-PRO activity in the active site. Residues 1751–1771 (VVLATLLIVWFVYTSNPVMFT) form a helical membrane-spanning segment. Positions 1751–1864 (VVLATLLIVW…KPVAGFVIIC (114 aa)) are HD1. A 3Ecto domain is found at 1769 to 1833 (MFTGIRVLDF…AYSVEQVYKD (65 aa)). At 1772 to 1843 (GIRVLDFLFE…AASGFIFNWN (72 aa)) the chain is on the lumenal side. Cystine bridges form between Cys-1785–Cys-1811 and Cys-1802–Cys-1808. Residues 1844 to 1864 (WLYLVFLILFVKPVAGFVIIC) form a helical membrane-spanning segment. Over 1865–2280 (YCVKYLVLNS…TFKCFKSYFK (416 aa)) the chain is Cytoplasmic. A Y1 region spans residues 1911-2001 (YIQVHHILYC…KLKRHVKPTA (91 aa)). Residues 1911–2263 (YIQVHHILYC…HTQKLLVEKK (353 aa)) enclose the CoV Nsp3 Y domain. 8 residues coordinate Zn(2+): His-1915, Cys-1920, Cys-1925, Cys-1928, Cys-1961, His-1964, Cys-1968, and Cys-1971. Positions 1915 to 1928 (HHILYCKDVTCEVC) are ZF1. A ZF2 region spans residues 1961–1971 (CKRHNWYCRNC). Residues 2002 to 2104 (YAYHVVDEAC…ILDQALYEQL (103 aa)) form a Y2 region. Residues 2002–2263 (YAYHVVDEAC…HTQKLLVEKK (262 aa)) form a coV-Y region. The Y3 stretch occupies residues 2105–2163 (VVEPVSKSVIDKVCSILSSIISVDTAALNYKAGTLRDALLSITKDEEAVDMAIFCHNHD). The tract at residues 2164 to 2263 (VDYTGDGFTN…HTQKLLVEKK (100 aa)) is Y4. A helical transmembrane segment spans residues 2281–2301 (WLLIFYILFTACCSGYYYMEV). The tract at residues 2281–2664 (WLLIFYILFT…LACCYLGFII (384 aa)) is HD2. The Lumenal segment spans residues 2302–2559 (SKSFVHPMYD…FFTGVNPNIY (258 aa)). Residues 2560–2580 (MQLATMFLILVVVVLIFAMVI) form a helical membrane-spanning segment. The Cytoplasmic portion of the chain corresponds to 2581 to 2611 (KFQGVFKAYATTVFITMLVWVINAFILCVHS). A helical transmembrane segment spans residues 2612–2632 (YNSVLAVILLVLYCYASLVTS). Residues 2633-2643 (RNTVIIMHCWL) are Lumenal-facing. A helical transmembrane segment spans residues 2644-2664 (VFTFGLIVPTWLACCYLGFII). Residues 2665-3096 (YMYTPLFLWC…SSFVRKATSW (432 aa)) are Cytoplasmic-facing. The 96-residue stretch at 2684–2779 (LYDGNEFVGN…RYSIGVSRLQ (96 aa)) folds into the Nsp4C domain. The 307-residue stretch at 2780–3086 (SGFKKLVSPS…FNQIGGVRLQ (307 aa)) folds into the Peptidase C30 domain. Catalysis depends on for 3CL-PRO activity residues His-2820 and Cys-2922. The helical transmembrane segment at 3097–3117 (FWSRCVLACFLFVLCAIVLFT) threads the bilayer. The HD3 stretch occupies residues 3097–3317 (FWSRCVLACF…WLCTCYFGLY (221 aa)). The Lumenal portion of the chain corresponds to 3118–3121 (AVPL). A helical membrane pass occupies residues 3122-3142 (KFYVYAAVILLMAVLFISFTV). Residues 3143–3151 (KHVMAYMDT) lie on the Cytoplasmic side of the membrane. A helical membrane pass occupies residues 3152–3172 (FLLPTLITVIIGVCAEVPFIY). The Lumenal segment spans residues 3173–3188 (NTLISQVVIFLSQWYD). The helical transmembrane segment at 3189-3209 (PVVFDTMVPWMFLPLVLYTAF) threads the bilayer. Residues 3210-3257 (KCVQGCYMNSFNTSLLMLYQFVKLGFVIYTSSNTLTAYTEGNWELFFE) are Cytoplasmic-facing. The chain crosses the membrane as a helical span at residues 3258–3278 (LVHTTVLANVSSNSLIGLFVF). At 3279–3296 (KCAKWMLYYCNATYLNNY) the chain is on the lumenal side. A helical membrane pass occupies residues 3297–3317 (VLMAVMVNCIGWLCTCYFGLY). Topologically, residues 3318–6629 (WWVNKVFGLT…FTSDSFVCTM (3312 aa)) are cytoplasmic. Residues 3380-3462 (AKLSDVKCTT…DILKRSTVLQ (83 aa)) enclose the RdRp Nsp7 cofactor domain. Positions 3463-3672 (SVTQEFSHIP…GHNKVDVVLQ (210 aa)) constitute a RdRp Nsp8 cofactor domain. The Nsp9 ssRNA-binding domain occupies 3673–3783 (NNELMPHGVK…GAISNVVVLQ (111 aa)). The region spanning 3785–3926 (KGHETEEVDA…CDSLRQPKSS (142 aa)) is the ExoN/MTase coactivator domain. Residues Cys-3858, Cys-3861, His-3867, Cys-3878, Cys-3904, Cys-3907, Cys-3915, and Cys-3917 each contribute to the Zn(2+) site. 2 zinc fingers span residues 3858–3878 (CLYC…DGRC) and 3904–3917 (CTVC…GCQC). In terms of domain architecture, NiRAN spans 3940–4198 (YLNRVRGSSE…APERYFEYDV (259 aa)). Residues 4203–4301 (KSYDLLKYDY…MNQDNTMSFS (99 aa)) form the Nsp12 Interface domain. Positions 4232, 4238, 4243, 4247, and 4424 each coordinate Zn(2+). Positions 4302–4868 (KMGLSQLMQF…NMYRAPTTLQ (567 aa)) constitute a Nsp12 RNA-dependent RNA polymerase domain. The segment at 4304–4517 (GLSQLMQFVG…HQKILKSIVN (214 aa)) is rdRp Fingers N-ter. Residues 4518 to 4556 (TRNASVVIGTTKFYGGWDNMLRNLIQGVEDPILMGWDYP) form a rdRp Palm N-ter region. In terms of domain architecture, RdRp catalytic spans 4548–4710 (PILMGWDYPK…CYNNTLAKQG (163 aa)). Residues 4557-4615 (KCDRAMPNLLRIAASLVLARKHTNCCSWSERIYRLYNECAQVLSETVLATGGIYVKPGG) form a rdRp Fingers C-ter region. Zn(2+)-binding residues include His-4578, Cys-4581, and Cys-4582. The tract at residues 4616–4751 (TSSGDATTAY…EKGPHEFCSQ (136 aa)) is rdRp Palm C-ter. Catalysis depends on residues Ser-4695, Asp-4696, and Asp-4697. The interval 4752-4868 (HTMLVEVDGE…NMYRAPTTLQ (117 aa)) is rdRp Thumb. A CV ZBD domain is found at 4869-4981 (SCGVCVVCNS…DDFNQLATTN (113 aa)). 12 residues coordinate Zn(2+): Cys-4873, Cys-4876, Cys-4884, Cys-4887, Cys-4894, Cys-4897, His-4901, His-4907, Cys-4918, Cys-4923, Cys-4940, and His-4943. A (+)RNA virus helicase ATP-binding domain is found at 5125–5305 (MVPECFVNNI…MVCVKPDIFL (181 aa)). Position 5150-5157 (5150-5157 (GPPGSGKS)) interacts with ATP. One can recognise a (+)RNA virus helicase C-terminal domain in the interval 5306–5477 (AKCYRCPKEI…QGTGLFKICN (172 aa)). In terms of domain architecture, ExoN spans 5539–5753 (MFITRDEAIR…RCLAINNAFC (215 aa)). Residues Asp-5557, Glu-5559, and Glu-5658 contribute to the active site. The Zn(2+) site is built by Cys-5674, Cys-5676, Cys-5692, His-5695, His-5723, Cys-5727, and His-5730. Catalysis depends on residues His-5734 and Asp-5739. Residue Cys-5745 participates in Zn(2+) binding. Positions 5762–5989 (YPHIANEDEV…NLWKSFSALQ (228 aa)) constitute an N7-MTase domain. 5797–5803 (DIGNPKG) contacts S-adenosyl-L-methionine. The interval 5877–5891 (CNGGSLYVNKHAFYT) is gpppA-binding. Positions 5915, 5935, 5946, and 5949 each coordinate Zn(2+). The Nsp15 N-terminal oligomerization domain maps to 5990-6050 (SIDNIAYNMY…SVAFELYAKR (61 aa)). Residues 6051–6166 (NIRTLPNNRI…VYKRVNGAFV (116 aa)) form the AV-Nsp11N/CoV-Nsp15M domain. Residues 6183–6324 (EPRSDIERDF…EDGSIKTCYP (142 aa)) enclose the NendoU domain. Catalysis depends on residues His-6212, His-6227, Lys-6267, Lys-6371, Asp-6455, Lys-6499, and Glu-6532. A Nidovirus-type SAM-dependent 2'-O-MTase domain is found at 6327-6626 (QSAWTCGYNM…NTSFTSDSFV (300 aa)).

It belongs to the coronaviruses polyprotein 1ab family. In terms of assembly, interacts with host PHB and PHB2. Interacts with papain-like protease and non-structural protein 6. As to quaternary structure, monomer. Homodimer. Only the homodimer shows catalytic activity. In terms of assembly, eight copies of nsp7 and eight copies of nsp8 assemble to form a heterohexadecamer dsRNA-encircling ring structure. Eight copies of nsp7 and eight copies of nsp8 assemble to form a heterohexadecamer dsRNA-encircling ring structure. Interacts with ORF6 protein. As to quaternary structure, homodimer. In terms of assembly, homododecamer. Interacts with proofreading exoribonuclease nsp14 and 2'-O-methyltransferase nsp16; these interactions enhance nsp14 and nsp16 enzymatic activities. Interacts with host DDX1 (via C-terminus). Interacts with non-structural protein 10. As to quaternary structure, homohexamer. In terms of assembly, interacts with non-structural protein 10. The cofactor is Mn(2+). It depends on Zn(2+) as a cofactor. Post-translationally, specific enzymatic cleavages in vivo by its own proteases yield mature proteins. 3C-like proteinase nsp5 liberates nsps 6-16 from the polyprotein. Papain-like and 3C-like proteinases are autocatalytically processed. In terms of processing, N-glycosylated.

The protein localises to the host endoplasmic reticulum membrane. The protein resides in the host cytoplasm. It localises to the host perinuclear region. Its subcellular location is the host endoplasmic reticulum. It is found in the host endoplasmic reticulum-Golgi intermediate compartment. It catalyses the reaction Thiol-dependent hydrolysis of ester, thioester, amide, peptide and isopeptide bonds formed by the C-terminal Gly of ubiquitin (a 76-residue protein attached to proteins as an intracellular targeting signal).. The catalysed reaction is RNA(n) + a ribonucleoside 5'-triphosphate = RNA(n+1) + diphosphate. The enzyme catalyses ATP + H2O = ADP + phosphate + H(+). It carries out the reaction uridylyl-uridylyl-ribonucleotide-RNA = a 3'-end uridylyl-2',3'-cyclophospho-uridine-RNA + a 5'-end dephospho-ribonucleoside-RNA. It catalyses the reaction a 5'-end diphospho-ribonucleoside in mRNA + GTP + H(+) = a 5'-end (5'-triphosphoguanosine)-ribonucleoside in mRNA + diphosphate. The catalysed reaction is a 5'-end (N(7)-methyl 5'-triphosphoguanosine)-ribonucleoside in mRNA + S-adenosyl-L-methionine = a 5'-end (N(7)-methyl 5'-triphosphoguanosine)-(2'-O-methyl-ribonucleoside) in mRNA + S-adenosyl-L-homocysteine + H(+). Its function is as follows. Multifunctional protein involved in the transcription and replication of viral RNAs. Contains the proteinases responsible for the cleavages of the polyprotein. May play a role in the modulation of host cell survival signaling pathway by interacting with host PHB and PHB2. Indeed, these two proteins play a role in maintaining the functional integrity of the mitochondria and protecting cells from various stresses. Functionally, responsible for the cleavages located at the N-terminus of the replicase polyprotein. In addition, PL-PRO possesses a deubiquitinating/deISGylating activity and processes both 'Lys-48'- and 'Lys-63'-linked polyubiquitin chains from cellular substrates. In terms of biological role, plays a role in host membrane rearrangement that leads to creation of cytoplasmic double-membrane vesicles (DMV) necessary for viral replication. Alone is able to induce paired membranes. Coexpression of nsp3 and nsp4 does not result in the formation of DMVs. Its function is as follows. Responsible for the majority of cleavages as it cleaves the C-terminus of replicase polyprotein at 11 sites. Recognizes substrates containing the core sequence [ILMVF]-Q-|-[SGACN]. Inhibited by the substrate-analog Cbz-Val-Asn-Ser-Thr-Leu-Gln-CMK. Forms a hexadecamer with nsp8 (8 subunits of each) that may participate in viral replication by acting as a primase. Alternatively, may synthesize substantially longer products than oligonucleotide primers. Functionally, forms a hexadecamer with nsp7 (8 subunits of each) that may participate in viral replication by acting as a primase. Alternatively, may synthesize substantially longer products than oligonucleotide primers. In terms of biological role, forms a primer, NSP9-pU, which is utilized by the polymerase for the initiation of RNA chains. Interacts with ribosome signal recognition particle RNA (SRP). Together with NSP8, suppress protein integration into the cell membrane, thereby disrupting host immune defenses. Its function is as follows. Plays a pivotal role in viral transcription by stimulating both nsp14 3'-5' exoribonuclease and nsp16 2'-O-methyltransferase activities. Therefore plays an essential role in viral mRNAs cap methylation. RNA-directed RNA polymerase that catalyzes the transcription of viral genomic and subgenomic RNAs. Acts in complex with nsp7 and nsp8 to transcribe both the minus and positive strands of genomic RNA. The kinase-like NiRAN domain of NSP12 attaches one or more nucleotides to the amino terminus of NSP9, forming a covalent RNA-protein intermediate that serves as transcription/replication primer. Subgenomic RNAs (sgRNAs) are formed by discontinuous transcription: The polymerase has the ability to pause at transcription-regulating sequences (TRS) and jump to the leader TRS, resulting in a major deletion. This creates a series of subgenomic RNAs that are replicated, transcribed and translated. In addition, Nsp12 is a subunit of the viral RNA capping enzyme that catalyzes the RNA guanylyltransferase reaction for genomic and sub-genomic RNAs. Subsequently, the NiRAN domain transfers RNA to GDP, and forms the core cap structure GpppA-RNA. Functionally, multi-functional protein with a zinc-binding domain in N-terminus displaying RNA and DNA duplex-unwinding activities with 5' to 3' polarity. Activity of helicase is dependent on magnesium. In terms of biological role, enzyme possessing two different activities: an exoribonuclease activity acting on both ssRNA and dsRNA in a 3' to 5' direction and a N7-guanine methyltransferase activity. Acts as a proofreading exoribonuclease for RNA replication, thereby lowering The sensitivity of the virus to RNA mutagens. Its function is as follows. Plays a role in viral transcription/replication and prevents the simultaneous activation of host cell dsRNA sensors, such as MDA5/IFIH1, OAS, and PKR. Acts by degrading the 5'-polyuridines generated during replication of the poly(A) region of viral genomic and subgenomic RNAs. Catalyzes a two-step reaction in which a 2'3'-cyclic phosphate (2'3'-cP) is first generated by 2'-O transesterification, which is then hydrolyzed to a 3'-phosphate (3'-P). If not degraded, poly(U) RNA would hybridize with poly(A) RNA tails and activate host dsRNA sensors. Methyltransferase that mediates mRNA cap 2'-O-ribose methylation to the 5'-cap structure of viral mRNAs. N7-methyl guanosine cap is a prerequisite for binding of nsp16. Therefore plays an essential role in viral mRNAs cap methylation which is essential to evade immune system. In Gallus gallus (Chicken), this protein is Replicase polyprotein 1ab (rep).